The chain runs to 551 residues: Solute carrier family 22 member 3 (551 aa).

Residues 21–41 (VFLLLCLTGVTFAFLFVGVVF) form a helical membrane-spanning segment. 3 N-linked (GlcNAc...) asparagine glycosylation sites follow: Asn-72, Asn-99, and Asn-114. A helical transmembrane segment spans residues 177–197 (LIVYLISCFGVGITGVVVAFA). Asn-199 carries an N-linked (GlcNAc...) asparagine glycan. 2 consecutive transmembrane segments (helical) span residues 236–256 (IVGI…PGIA) and 264–284 (GIQL…WVVP). The short motif at 284–288 (PESPR) is the Proline-rich sequence element. A glycan (N-linked (GlcNAc...) asparagine) is linked at Asn-317. The next 3 membrane-spanning stretches (helical) occupy residues 376–396 (MDFF…LLTI), 463–483 (FGVS…PFLL), and 493–513 (LPLI…MLLP).

The protein belongs to the major facilitator (TC 2.A.1) superfamily. Organic cation transporter (TC 2.A.1.19) family. Highly expressed in placenta. Expressed in intestine, hear, kidney and lung. Widely expressed in brain, particularly in hippocampus, cerebellum, cerebral cortex. In the brain, expressed predominantly in regions located at the brain-cerebrospinal fluid border, with expression extending to regions that belong to monoaminergic pathways such as raphe nuclei, striatum and thalamus. In brain, expressed in neurons and glial cells of amygdala. Expression is low in kidney and lung and undetectable in liver. Expressed in Sertoli cells in testis. Expressed in tracheal and bronchial epithelium of the respiratory tract, where it localizes to the apical membrane of ciliated and brush cells, and in basal cells.

It is found in the cell membrane. The protein localises to the apical cell membrane. The protein resides in the basolateral cell membrane. Its subcellular location is the mitochondrion membrane. It localises to the endomembrane system. It is found in the nucleus membrane. The protein localises to the nucleus outer membrane. It carries out the reaction (R)-noradrenaline(out) = (R)-noradrenaline(in). It catalyses the reaction (R)-adrenaline(out) = (R)-adrenaline(in). The enzyme catalyses serotonin(out) = serotonin(in). The catalysed reaction is dopamine(out) = dopamine(in). It carries out the reaction histamine(out) = histamine(in). It catalyses the reaction tyramine(in) = tyramine(out). The enzyme catalyses guanidine(out) = guanidine(in). The catalysed reaction is agmatine(out) = agmatine(in). It carries out the reaction spermidine(in) = spermidine(out). It catalyses the reaction L-histidyl-L-proline diketopiperazine(in) = L-histidyl-L-proline diketopiperazine(out). The enzyme catalyses (R)-salsolinol(in) = (R)-salsolinol(out). Functionally, electrogenic voltage-dependent transporter that mediates the transport of a variety of organic cations such as endogenous bioactive amines, cationic drugs and xenobiotics. Cation cellular uptake or release is driven by the electrochemical potential, i.e. membrane potential and concentration gradient. Functions as a Na(+)- and Cl(-)-independent, bidirectional uniporter. Implicated in neuronal monoamine neurotransmitters cellular uptake such as dopamine, adrenaline/epinephrine, noradrenaline/norepinephrine, histamine, serotonin and tyramine, thereby supporting a role in homeostatic regulation of aminergic neurotransmission in the brain. Transports dopaminergic neuromodulators cyclo(his-pro) and salsolinol with low efficiency. May be involved in the uptake and disposition of cationic compounds by renal clearance from the blood flow. May contribute to regulate the transport of cationic compounds in testis across the blood-testis-barrier. Mediates the transport of polyamine spermidine and putrescine. Mediates the bidirectional transport of polyamine agmatine. Also transports guanidine. May also mediate intracellular transport of organic cations, thereby playing a role in amine metabolism and intracellular signaling. The polypeptide is Solute carrier family 22 member 3 (Rattus norvegicus (Rat)).